Consider the following 410-residue polypeptide: Sulfate adenylyltransferase (410 aa).

Belongs to the sulfate adenylyltransferase family.

The enzyme catalyses sulfate + ATP + H(+) = adenosine 5'-phosphosulfate + diphosphate. Its pathway is sulfur metabolism; hydrogen sulfide biosynthesis; sulfite from sulfate: step 1/3. The sequence is that of Sulfate adenylyltransferase from Syntrophobacter fumaroxidans (strain DSM 10017 / MPOB).